Consider the following 439-residue polypeptide: GTPase Obg (439 aa).

Residues 4-162 (IEFIDVVDIY…KHIQLELKLL (159 aa)) form the Obg domain. Residues 163–336 (ADVGLIGYPN…LKYAMWDIIK (174 aa)) form the OBG-type G domain. GTP contacts are provided by residues 169-176 (GYPNVGKS), 194-198 (FTTLV), 218-221 (DIPG), 288-291 (NKSD), and 317-319 (SAV). Mg(2+) contacts are provided by Ser176 and Thr196. An OCT domain is found at 361–439 (LVLPDRVDIK…VEGVDFIFKE (79 aa)).

It belongs to the TRAFAC class OBG-HflX-like GTPase superfamily. OBG GTPase family. As to quaternary structure, monomer. Mg(2+) is required as a cofactor.

It localises to the cytoplasm. An essential GTPase which binds GTP, GDP and possibly (p)ppGpp with moderate affinity, with high nucleotide exchange rates and a fairly low GTP hydrolysis rate. Plays a role in control of the cell cycle, stress response, ribosome biogenesis and in those bacteria that undergo differentiation, in morphogenesis control. The polypeptide is GTPase Obg (Fervidobacterium nodosum (strain ATCC 35602 / DSM 5306 / Rt17-B1)).